The primary structure comprises 182 residues: NADH-dependent FAD reductase (182 aa).

Position 16 (aspartate 16) interacts with NAD(+). FAD is bound by residues 47 to 48 (NS), 62 to 64 (CVG), and histidine 98. Histidine 143 is a binding site for NAD(+).

This sequence belongs to the non-flavoprotein flavin reductase family. In terms of assembly, homodimer.

It carries out the reaction FADH2 + NAD(+) = FAD + NADH + 2 H(+). It participates in antibiotic biosynthesis. The SgcE6-SgcC hydroxylation activity decreases in the presence of excess FAD. Functionally, reductase component of a two-component system involved in the biosynthesis of the enediyne antitumor antibiotic C-1027. SgcE6 provides the FADH(2) required by both the halogenase SgcC3 and the monooxygenase SgcC through free diffusion. Accepts only NADH and FAD as substrates. The sequence is that of NADH-dependent FAD reductase from Streptomyces globisporus.